The primary structure comprises 98 residues: Large ribosomal subunit protein uL23 (98 aa).

This sequence belongs to the universal ribosomal protein uL23 family. In terms of assembly, part of the 50S ribosomal subunit. Contacts protein L29, and trigger factor when it is bound to the ribosome.

Functionally, one of the early assembly proteins it binds 23S rRNA. One of the proteins that surrounds the polypeptide exit tunnel on the outside of the ribosome. Forms the main docking site for trigger factor binding to the ribosome. The chain is Large ribosomal subunit protein uL23 from Bifidobacterium longum (strain DJO10A).